Consider the following 395-residue polypeptide: Elongation factor Tu (395 aa).

A tr-type G domain is found at 10–204; sequence KPHVNVGTIG…AVDEYIPEPV (195 aa). Residues 19 to 26 are G1; it reads GHVDHGKT. 19-26 contacts GTP; that stretch reads GHVDHGKT. Thr26 is a Mg(2+) binding site. Positions 60–64 are G2; sequence GITIA. Positions 81 to 84 are G3; it reads DCPG. GTP-binding positions include 81-85 and 136-139; these read DCPGH and NKVD. The tract at residues 136–139 is G4; the sequence is NKVD. The tract at residues 174–176 is G5; sequence SAL.

The protein belongs to the TRAFAC class translation factor GTPase superfamily. Classic translation factor GTPase family. EF-Tu/EF-1A subfamily. In terms of assembly, monomer.

The protein resides in the cytoplasm. It carries out the reaction GTP + H2O = GDP + phosphate + H(+). Its function is as follows. GTP hydrolase that promotes the GTP-dependent binding of aminoacyl-tRNA to the A-site of ribosomes during protein biosynthesis. In Exiguobacterium sp. (strain ATCC BAA-1283 / AT1b), this protein is Elongation factor Tu.